The chain runs to 776 residues: Probable E3 ubiquitin-protein ligase HECTD2 (776 aa).

Positions 1-46 (MSEAVRVPSPATPLVVAAPAPEERKGKESEREKLPPIVSAGAGATA) are disordered. Residues 7-20 (VPSPATPLVVAAPA) show a composition bias toward low complexity. At serine 9 the chain carries Phosphoserine. The segment covering 21–34 (PEERKGKESEREKL) has biased composition (basic and acidic residues). The HECT domain occupies 437 to 776 (KRADLKKKLK…ISNSEGFGLE (340 aa)). The Glycyl thioester intermediate role is filled by cysteine 744.

The enzyme catalyses S-ubiquitinyl-[E2 ubiquitin-conjugating enzyme]-L-cysteine + [acceptor protein]-L-lysine = [E2 ubiquitin-conjugating enzyme]-L-cysteine + N(6)-ubiquitinyl-[acceptor protein]-L-lysine.. It functions in the pathway protein modification; protein ubiquitination. In terms of biological role, E3 ubiquitin-protein ligase which accepts ubiquitin from an E2 ubiquitin-conjugating enzyme in the form of a thioester and then directly transfers the ubiquitin to targeted substrates. (Microbial infection) Catalyzes ubiquitination of Botulinum neurotoxin A light chain (LC) of C.botulinum neurotoxin type A (BoNT/A). The polypeptide is Probable E3 ubiquitin-protein ligase HECTD2 (Homo sapiens (Human)).